The primary structure comprises 273 residues: Formamidopyrimidine-DNA glycosylase (273 aa).

The Schiff-base intermediate with DNA role is filled by Pro-2. The active-site Proton donor is Glu-3. Residue Lys-58 is the Proton donor; for beta-elimination activity of the active site. Residues His-91, Arg-109, and Arg-154 each coordinate DNA. The FPG-type zinc finger occupies 239 to 273 (FCYARTGEPCRICKTPIRQIVQGQRSTFYCPNCQK). The active-site Proton donor; for delta-elimination activity is Arg-263.

This sequence belongs to the FPG family. As to quaternary structure, monomer. It depends on Zn(2+) as a cofactor.

The catalysed reaction is Hydrolysis of DNA containing ring-opened 7-methylguanine residues, releasing 2,6-diamino-4-hydroxy-5-(N-methyl)formamidopyrimidine.. It catalyses the reaction 2'-deoxyribonucleotide-(2'-deoxyribose 5'-phosphate)-2'-deoxyribonucleotide-DNA = a 3'-end 2'-deoxyribonucleotide-(2,3-dehydro-2,3-deoxyribose 5'-phosphate)-DNA + a 5'-end 5'-phospho-2'-deoxyribonucleoside-DNA + H(+). Functionally, involved in base excision repair of DNA damaged by oxidation or by mutagenic agents. Acts as a DNA glycosylase that recognizes and removes damaged bases. Has a preference for oxidized purines, such as 7,8-dihydro-8-oxoguanine (8-oxoG). Has AP (apurinic/apyrimidinic) lyase activity and introduces nicks in the DNA strand. Cleaves the DNA backbone by beta-delta elimination to generate a single-strand break at the site of the removed base with both 3'- and 5'-phosphates. This Janthinobacterium sp. (strain Marseille) (Minibacterium massiliensis) protein is Formamidopyrimidine-DNA glycosylase.